Reading from the N-terminus, the 135-residue chain is Large ribosomal subunit protein uL16c (135 aa).

The segment covering M1 to M17 has biased composition (basic residues). The disordered stretch occupies residues M1–S21.

Belongs to the universal ribosomal protein uL16 family. As to quaternary structure, part of the 50S ribosomal subunit.

It localises to the plastid. The protein localises to the chloroplast. This chain is Large ribosomal subunit protein uL16c, found in Amborella trichopoda.